We begin with the raw amino-acid sequence, 488 residues long: MSTANTPEDEQKPSLNAFKQPRAFYLIFSIELWERFGYYGLQGIMAVYLVKMLGMSEAEAITVFAAFTALVYGFVAIGGWLGDKILGTKRVIVLGAIVLAIGYAMVAFSDHDKDMIYWGLATIAVGNGLFKANPSSLLATCYEKDDPQLDGAFTMYYMSINVGSFLSMLATPWLAANYGWDVAFALSVVGMLITLANFMLCRGWIKDKGSRPDFEPLNYLKLLLTLVGIVALTAVSTWLLHNNEVATWSLAIISLGIILIFARETFMMKGVARRKMIVAFLLMVEAVVFFVLYDQMPTSLNFFAIHNVEHAILGFSVEPEQFQSLNPFWIMLASPLLAAIYNFMGDKLPMPYKFTVGMFLSATAFLVLPLGASMANEAGIVSSWWLVASYGFQSIGELMISGLGLAMVAQLVPQRLMGFIMGAWFLTSAAAAIIAGKVASLMAVPEDVQNAHASLEIYSSVFLQIGIVTGVIALLMLFTAPMLSKMTQ.

Over 1 to 35 (MSTANTPEDEQKPSLNAFKQPRAFYLIFSIELWER) the chain is Cytoplasmic. Residues 36–56 (FGYYGLQGIMAVYLVKMLGMS) form a helical membrane-spanning segment. Topologically, residues 57-60 (EAEA) are periplasmic. A helical transmembrane segment spans residues 61–81 (ITVFAAFTALVYGFVAIGGWL). The Cytoplasmic segment spans residues 82-90 (GDKILGTKR). Residues 91-111 (VIVLGAIVLAIGYAMVAFSDH) traverse the membrane as a helical segment. The Periplasmic portion of the chain corresponds to 112 to 114 (DKD). The helical transmembrane segment at 115-135 (MIYWGLATIAVGNGLFKANPS) threads the bilayer. Over 136 to 154 (SLLATCYEKDDPQLDGAFT) the chain is Cytoplasmic. Residues 155–175 (MYYMSINVGSFLSMLATPWLA) form a helical membrane-spanning segment. Over 176-179 (ANYG) the chain is Periplasmic. Residues 180–200 (WDVAFALSVVGMLITLANFML) form a helical membrane-spanning segment. At 201 to 219 (CRGWIKDKGSRPDFEPLNY) the chain is on the cytoplasmic side. A helical membrane pass occupies residues 220–240 (LKLLLTLVGIVALTAVSTWLL). A topological domain (periplasmic) is located at residue His-241. The chain crosses the membrane as a helical span at residues 242–262 (NNEVATWSLAIISLGIILIFA). At 263-275 (RETFMMKGVARRK) the chain is on the cytoplasmic side. The chain crosses the membrane as a helical span at residues 276–296 (MIVAFLLMVEAVVFFVLYDQM). Residues 297-324 (PTSLNFFAIHNVEHAILGFSVEPEQFQS) are Periplasmic-facing. A helical transmembrane segment spans residues 325 to 345 (LNPFWIMLASPLLAAIYNFMG). Over 346 to 353 (DKLPMPYK) the chain is Cytoplasmic. A helical transmembrane segment spans residues 354-374 (FTVGMFLSATAFLVLPLGASM). At 375 to 391 (ANEAGIVSSWWLVASYG) the chain is on the periplasmic side. The helical transmembrane segment at 392–412 (FQSIGELMISGLGLAMVAQLV) threads the bilayer. Residues 413–415 (PQR) are Cytoplasmic-facing. A helical transmembrane segment spans residues 416–436 (LMGFIMGAWFLTSAAAAIIAG). Residues 437–460 (KVASLMAVPEDVQNAHASLEIYSS) lie on the Periplasmic side of the membrane. A helical membrane pass occupies residues 461–481 (VFLQIGIVTGVIALLMLFTAP). The Cytoplasmic segment spans residues 482–488 (MLSKMTQ).

It belongs to the major facilitator superfamily. Proton-dependent oligopeptide transporter (POT/PTR) (TC 2.A.17) family. DtpA subfamily.

The protein resides in the cell inner membrane. Its function is as follows. Proton-dependent permease that transports di- and tripeptides. This is Dipeptide and tripeptide permease A from Proteus mirabilis (strain HI4320).